The sequence spans 144 residues: Small ribosomal subunit protein eS19 (144 aa).

It belongs to the eukaryotic ribosomal protein eS19 family.

The polypeptide is Small ribosomal subunit protein eS19 (RPS19) (Argopecten irradians (Bay scallop)).